The sequence spans 97 residues: Aspartyl/glutamyl-tRNA(Asn/Gln) amidotransferase subunit C (97 aa).

This sequence belongs to the GatC family. In terms of assembly, heterotrimer of A, B and C subunits.

The catalysed reaction is L-glutamyl-tRNA(Gln) + L-glutamine + ATP + H2O = L-glutaminyl-tRNA(Gln) + L-glutamate + ADP + phosphate + H(+). It carries out the reaction L-aspartyl-tRNA(Asn) + L-glutamine + ATP + H2O = L-asparaginyl-tRNA(Asn) + L-glutamate + ADP + phosphate + 2 H(+). Allows the formation of correctly charged Asn-tRNA(Asn) or Gln-tRNA(Gln) through the transamidation of misacylated Asp-tRNA(Asn) or Glu-tRNA(Gln) in organisms which lack either or both of asparaginyl-tRNA or glutaminyl-tRNA synthetases. The reaction takes place in the presence of glutamine and ATP through an activated phospho-Asp-tRNA(Asn) or phospho-Glu-tRNA(Gln). The sequence is that of Aspartyl/glutamyl-tRNA(Asn/Gln) amidotransferase subunit C from Prochlorococcus marinus (strain MIT 9211).